A 192-amino-acid chain; its full sequence is Large ribosomal subunit protein uL6 (192 aa).

Belongs to the universal ribosomal protein uL6 family. Component of the large ribosomal subunit.

Its subcellular location is the cytoplasm. Its function is as follows. Component of the large ribosomal subunit. The ribosome is a large ribonucleoprotein complex responsible for the synthesis of proteins in the cell. The protein is Large ribosomal subunit protein uL6 (rpl9) of Ictalurus punctatus (Channel catfish).